A 325-amino-acid chain; its full sequence is Protein translocase subunit SecF (325 aa).

A run of 6 helical transmembrane segments spans residues 36 to 56 (GYIL…TKGF), 148 to 168 (LAQG…IYVG), 175 to 197 (LGFG…FSAL), 202 to 224 (DLTF…IVVF), 254 to 274 (TIIT…FGGP), and 281 to 301 (LALL…AIAI).

It belongs to the SecD/SecF family. SecF subfamily. Forms a complex with SecD. Part of the essential Sec protein translocation apparatus which comprises SecA, SecYEG and auxiliary proteins SecDF-YajC and YidC.

It localises to the cell inner membrane. In terms of biological role, part of the Sec protein translocase complex. Interacts with the SecYEG preprotein conducting channel. SecDF uses the proton motive force (PMF) to complete protein translocation after the ATP-dependent function of SecA. The chain is Protein translocase subunit SecF from Haemophilus influenzae (strain ATCC 51907 / DSM 11121 / KW20 / Rd).